The chain runs to 454 residues: V-type ATP synthase subunit I 2 (454 aa).

The disordered stretch occupies residues 101 to 121 (EREGDAPSVPRGKSSVAHDSA). 4 helical membrane-spanning segments follow: residues 254 to 274 (LLFG…VLGL), 293 to 313 (VFLS…EFFA), 351 to 371 (MAFF…GLII), and 424 to 444 (ACLS…SVCV).

The protein belongs to the V-ATPase 116 kDa subunit family.

The protein resides in the cell membrane. Functionally, produces ATP from ADP in the presence of a proton gradient across the membrane. The sequence is that of V-type ATP synthase subunit I 2 (atpI2) from Treponema pallidum (strain Nichols).